Here is a 153-residue protein sequence, read N- to C-terminus: MIINETKGRVWHGHVELADTFIKRFRGLMLVSNVNHALIFVLPIENRLNASIHMFFMLSDIDVIWLDSMRRVVDFKTARRWRIYTPKESARYVIEGPVGLIRTLDVEEGDLISWDVTEKKEKSVPVKVSFPGKISFENERNTVVFSKDIIELP.

Belongs to the UPF0127 family.

The polypeptide is UPF0127 protein TGAM_1372 (Thermococcus gammatolerans (strain DSM 15229 / JCM 11827 / EJ3)).